The primary structure comprises 233 residues: Putative cobalt transport protein CbiM (233 aa).

Transmembrane regions (helical) follow at residues 9-29 (PPMWCAVWWVLSGIVIAYGIV), 43-63 (PLVAISGAYMFILSSLKMPSV), 75-95 (LGAVLFGVPITAVLAAIVLLF), 107-127 (TLGANDFSMGIVGPAAAVIVY), 138-158 (TVGIFFAALFGDWLTYVTTAV), and 177-197 (IVIYAYTQVPLAIAEGILTVI).

The protein belongs to the CbiM family. Forms an energy-coupling factor (ECF) transporter complex composed of an ATP-binding protein (A component, CbiO), a transmembrane protein (T component, CbiQ) and 2 possible substrate-capture proteins (S components, CbiM and CbiN) of unknown stoichimetry.

It is found in the cell membrane. It participates in cofactor biosynthesis; adenosylcobalamin biosynthesis. Functionally, part of the energy-coupling factor (ECF) transporter complex CbiMNOQ involved in cobalt import. The chain is Putative cobalt transport protein CbiM from Methanocaldococcus jannaschii (strain ATCC 43067 / DSM 2661 / JAL-1 / JCM 10045 / NBRC 100440) (Methanococcus jannaschii).